The sequence spans 343 residues: Uroporphyrinogen decarboxylase (343 aa).

Residues 26–30, D75, Y150, S205, and H319 each bind substrate; that span reads RQAGR.

This sequence belongs to the uroporphyrinogen decarboxylase family. Homodimer.

It is found in the cytoplasm. It catalyses the reaction uroporphyrinogen III + 4 H(+) = coproporphyrinogen III + 4 CO2. The protein operates within porphyrin-containing compound metabolism; protoporphyrin-IX biosynthesis; coproporphyrinogen-III from 5-aminolevulinate: step 4/4. Catalyzes the decarboxylation of four acetate groups of uroporphyrinogen-III to yield coproporphyrinogen-III. This Syntrophotalea carbinolica (strain DSM 2380 / NBRC 103641 / GraBd1) (Pelobacter carbinolicus) protein is Uroporphyrinogen decarboxylase.